Reading from the N-terminus, the 181-residue chain is Adenine phosphoribosyltransferase (181 aa).

It belongs to the purine/pyrimidine phosphoribosyltransferase family. In terms of assembly, homodimer.

It localises to the cytoplasm. It carries out the reaction AMP + diphosphate = 5-phospho-alpha-D-ribose 1-diphosphate + adenine. Its pathway is purine metabolism; AMP biosynthesis via salvage pathway; AMP from adenine: step 1/1. In terms of biological role, catalyzes a salvage reaction resulting in the formation of AMP, that is energically less costly than de novo synthesis. In Chromohalobacter salexigens (strain ATCC BAA-138 / DSM 3043 / CIP 106854 / NCIMB 13768 / 1H11), this protein is Adenine phosphoribosyltransferase.